We begin with the raw amino-acid sequence, 275 residues long: Dermonecrotic toxin SpaSicTox-betaIIA3 (275 aa).

Residue His-5 is part of the active site. Mg(2+)-binding residues include Glu-25 and Asp-27. Catalysis depends on His-41, which acts as the Nucleophile. Disulfide bonds link Cys-45–Cys-51 and Cys-47–Cys-190. Asp-85 contributes to the Mg(2+) binding site.

This sequence belongs to the arthropod phospholipase D family. Class II subfamily. Mg(2+) serves as cofactor. In terms of tissue distribution, expressed by the venom gland.

It is found in the secreted. The enzyme catalyses an N-(acyl)-sphingosylphosphocholine = an N-(acyl)-sphingosyl-1,3-cyclic phosphate + choline. It carries out the reaction an N-(acyl)-sphingosylphosphoethanolamine = an N-(acyl)-sphingosyl-1,3-cyclic phosphate + ethanolamine. It catalyses the reaction a 1-acyl-sn-glycero-3-phosphocholine = a 1-acyl-sn-glycero-2,3-cyclic phosphate + choline. The catalysed reaction is a 1-acyl-sn-glycero-3-phosphoethanolamine = a 1-acyl-sn-glycero-2,3-cyclic phosphate + ethanolamine. Dermonecrotic toxins cleave the phosphodiester linkage between the phosphate and headgroup of certain phospholipids (sphingolipid and lysolipid substrates), forming an alcohol (often choline) and a cyclic phosphate. This toxin acts on sphingomyelin (SM). It may also act on ceramide phosphoethanolamine (CPE), lysophosphatidylcholine (LPC) and lysophosphatidylethanolamine (LPE), but not on lysophosphatidylserine (LPS), and lysophosphatidylglycerol (LPG). It acts by transphosphatidylation, releasing exclusively cyclic phosphate products as second products. Induces dermonecrosis, hemolysis, increased vascular permeability, edema, inflammatory response, and platelet aggregation. The chain is Dermonecrotic toxin SpaSicTox-betaIIA3 from Sicarius patagonicus (Six-eyed sand spider).